The primary structure comprises 121 residues: Somatostatin-1 (121 aa).

Positions Met1 to Ser24 are cleaved as a signal peptide. Residues Cys25–Glu105 constitute a propeptide that is removed on maturation. The disordered stretch occupies residues Asn76–Pro99. Residues Cys110 and Cys121 are joined by a disulfide bond.

Belongs to the somatostatin family.

It is found in the secreted. Its function is as follows. Somatostatin inhibits the release of somatotropin. The sequence is that of Somatostatin-1 (sst1) from Lophius americanus (American angler).